A 186-amino-acid chain; its full sequence is Ribosome-recycling factor (186 aa).

The protein belongs to the RRF family.

It is found in the cytoplasm. Responsible for the release of ribosomes from messenger RNA at the termination of protein biosynthesis. May increase the efficiency of translation by recycling ribosomes from one round of translation to another. In Rickettsia akari (strain Hartford), this protein is Ribosome-recycling factor.